A 30-amino-acid chain; its full sequence is Photosystem I reaction center subunit XII (30 aa).

Residues 7–26 traverse the membrane as a helical segment; sequence IMVALFAALFTGILALRLGT.

It belongs to the PsaM family.

The protein localises to the plastid. Its subcellular location is the chloroplast thylakoid membrane. The polypeptide is Photosystem I reaction center subunit XII (Mesostigma viride (Green alga)).